A 238-amino-acid chain; its full sequence is Uridylate kinase (238 aa).

12-15 (KLSG) serves as a coordination point for ATP. Positions 20–25 (GQQGFG) are involved in allosteric activation by GTP. Gly-54 serves as a coordination point for UMP. Positions 55 and 59 each coordinate ATP. UMP contacts are provided by residues Asp-74 and 135-142 (TGNPFFTT). The ATP site is built by Thr-162, Asn-163, Tyr-168, and Asp-171.

The protein belongs to the UMP kinase family. As to quaternary structure, homohexamer.

The protein resides in the cytoplasm. It catalyses the reaction UMP + ATP = UDP + ADP. It participates in pyrimidine metabolism; CTP biosynthesis via de novo pathway; UDP from UMP (UMPK route): step 1/1. Its activity is regulated as follows. Allosterically activated by GTP. Inhibited by UTP. Catalyzes the reversible phosphorylation of UMP to UDP. The sequence is that of Uridylate kinase from Bradyrhizobium diazoefficiens (strain JCM 10833 / BCRC 13528 / IAM 13628 / NBRC 14792 / USDA 110).